Here is a 70-residue protein sequence, read N- to C-terminus: Large ribosomal subunit protein eL38 (70 aa).

Belongs to the eukaryotic ribosomal protein eL38 family.

This chain is Large ribosomal subunit protein eL38 (RpL38), found in Julodis onopordi (Jewel beetle).